Consider the following 343-residue polypeptide: Anthranilate phosphoribosyltransferase (343 aa).

Residues Gly85, Gly88–Asp89, Thr93, Asn95–Thr98, Lys113–Ser121, and Ala125 contribute to the 5-phospho-alpha-D-ribose 1-diphosphate site. Anthranilate is bound at residue Gly85. Ser97 provides a ligand contact to Mg(2+). Residue Arg171 coordinates anthranilate. The Mg(2+) site is built by Asp230 and Glu231.

Belongs to the anthranilate phosphoribosyltransferase family. Homodimer. Mg(2+) serves as cofactor.

It carries out the reaction N-(5-phospho-beta-D-ribosyl)anthranilate + diphosphate = 5-phospho-alpha-D-ribose 1-diphosphate + anthranilate. The protein operates within amino-acid biosynthesis; L-tryptophan biosynthesis; L-tryptophan from chorismate: step 2/5. Functionally, catalyzes the transfer of the phosphoribosyl group of 5-phosphorylribose-1-pyrophosphate (PRPP) to anthranilate to yield N-(5'-phosphoribosyl)-anthranilate (PRA). The protein is Anthranilate phosphoribosyltransferase of Aromatoleum aromaticum (strain DSM 19018 / LMG 30748 / EbN1) (Azoarcus sp. (strain EbN1)).